The sequence spans 428 residues: 3-phosphoshikimate 1-carboxyvinyltransferase (428 aa).

Positions 23, 24, and 28 each coordinate 3-phosphoshikimate. Lys23 provides a ligand contact to phosphoenolpyruvate. Phosphoenolpyruvate is bound by residues Gly97 and Arg125. Residues Ser170, Ser171, Gln172, Ser198, Asp314, Asn337, and Lys341 each contribute to the 3-phosphoshikimate site. Gln172 contributes to the phosphoenolpyruvate binding site. Asp314 (proton acceptor) is an active-site residue. The phosphoenolpyruvate site is built by Arg345, Arg387, and Lys412.

It belongs to the EPSP synthase family. As to quaternary structure, monomer.

The protein localises to the cytoplasm. The catalysed reaction is 3-phosphoshikimate + phosphoenolpyruvate = 5-O-(1-carboxyvinyl)-3-phosphoshikimate + phosphate. The protein operates within metabolic intermediate biosynthesis; chorismate biosynthesis; chorismate from D-erythrose 4-phosphate and phosphoenolpyruvate: step 6/7. Catalyzes the transfer of the enolpyruvyl moiety of phosphoenolpyruvate (PEP) to the 5-hydroxyl of shikimate-3-phosphate (S3P) to produce enolpyruvyl shikimate-3-phosphate and inorganic phosphate. The polypeptide is 3-phosphoshikimate 1-carboxyvinyltransferase (Buchnera aphidicola subsp. Schizaphis graminum (strain Sg)).